Here is a 562-residue protein sequence, read N- to C-terminus: NAD-dependent malic enzyme 1 (562 aa).

Residue Tyr-101 is the Proton donor of the active site. Arg-154 provides a ligand contact to NAD(+). The active-site Proton acceptor is Lys-172. Positions 243, 244, and 267 each coordinate a divalent metal cation. Residues Asp-267 and Asn-415 each coordinate NAD(+).

It belongs to the malic enzymes family. In terms of assembly, homotetramer. Requires Mg(2+) as cofactor. The cofactor is Mn(2+).

It catalyses the reaction (S)-malate + NAD(+) = pyruvate + CO2 + NADH. The enzyme catalyses oxaloacetate + H(+) = pyruvate + CO2. In Vibrio vulnificus (strain YJ016), this protein is NAD-dependent malic enzyme 1.